Here is a 465-residue protein sequence, read N- to C-terminus: Argininosuccinate lyase (465 aa).

It belongs to the lyase 1 family. Argininosuccinate lyase subfamily.

It is found in the cytoplasm. The catalysed reaction is 2-(N(omega)-L-arginino)succinate = fumarate + L-arginine. Its pathway is amino-acid biosynthesis; L-arginine biosynthesis; L-arginine from L-ornithine and carbamoyl phosphate: step 3/3. The polypeptide is Argininosuccinate lyase (Clostridium botulinum (strain Alaska E43 / Type E3)).